The following is a 226-amino-acid chain: MAQAGVSLPKLVIGEVTFPPAAAPPGSSSSLFLAGAGERGLEIDRQFVVFTAIGVYLEDLAVSTLGPKWKGKTADDLAGNSDFFRDIFTGPFEKFTRITMVKPLSGQQYSEKVEENCVAHWKAAGTYTEAEAAAVEKFKEACKNETFPPGTSILFTHQVSPASLTITFWREGSMPETGNTVIESKALSEAILESIIGKHGVSPGAKRSVAQRLSEILEEVKLEGSK.

Substrate-binding residues include T51, N116, and S194.

This sequence belongs to the chalcone isomerase family.

It carries out the reaction a chalcone = a flavanone.. It participates in secondary metabolite biosynthesis; flavonoid biosynthesis. In terms of biological role, catalyzes the intramolecular cyclization of bicyclic chalcones into tricyclic (S)-flavanones. Responsible for the isomerization of 4,2',4',6'-tetrahydroxychalcone (also termed chalcone) into naringenin. The protein is Chalcone--flavanone isomerase (CHI) of Canna generalis (Canna lily).